Here is a 61-residue protein sequence, read N- to C-terminus: Large ribosomal subunit protein bL28 (61 aa).

This sequence belongs to the bacterial ribosomal protein bL28 family.

The sequence is that of Large ribosomal subunit protein bL28 from Nocardioides sp. (strain ATCC BAA-499 / JS614).